A 164-amino-acid chain; its full sequence is Phosphopantetheine adenylyltransferase (164 aa).

Serine 10 provides a ligand contact to substrate. ATP-binding positions include 10–11 and histidine 18; that span reads SF. Residues lysine 42, methionine 74, and arginine 88 each contribute to the substrate site. ATP is bound by residues 89-91, glutamate 99, and 124-130; these read GLR and YFFVSAR.

The protein belongs to the bacterial CoaD family. As to quaternary structure, homohexamer. Mg(2+) is required as a cofactor.

The protein resides in the cytoplasm. It catalyses the reaction (R)-4'-phosphopantetheine + ATP + H(+) = 3'-dephospho-CoA + diphosphate. It participates in cofactor biosynthesis; coenzyme A biosynthesis; CoA from (R)-pantothenate: step 4/5. Its function is as follows. Reversibly transfers an adenylyl group from ATP to 4'-phosphopantetheine, yielding dephospho-CoA (dPCoA) and pyrophosphate. This is Phosphopantetheine adenylyltransferase from Anaeromyxobacter dehalogenans (strain 2CP-1 / ATCC BAA-258).